The sequence spans 209 residues: Large ribosomal subunit protein uL3 (209 aa).

Residues 129–153 (SRGPMSHGSKFHRAPGSMGAASDPS) form a disordered region.

Belongs to the universal ribosomal protein uL3 family. In terms of assembly, part of the 50S ribosomal subunit. Forms a cluster with proteins L14 and L19.

Its function is as follows. One of the primary rRNA binding proteins, it binds directly near the 3'-end of the 23S rRNA, where it nucleates assembly of the 50S subunit. This Clostridium perfringens (strain 13 / Type A) protein is Large ribosomal subunit protein uL3.